The chain runs to 363 residues: Ribosomal RNA large subunit methyltransferase M (363 aa).

S-adenosyl-L-methionine is bound by residues Ser190, 223-226 (CPGG), Asp242, Asp262, and Asp279. The active-site Proton acceptor is Lys308.

It belongs to the class I-like SAM-binding methyltransferase superfamily. RNA methyltransferase RlmE family. RlmM subfamily. In terms of assembly, monomer.

The protein localises to the cytoplasm. The catalysed reaction is cytidine(2498) in 23S rRNA + S-adenosyl-L-methionine = 2'-O-methylcytidine(2498) in 23S rRNA + S-adenosyl-L-homocysteine + H(+). Functionally, catalyzes the 2'-O-methylation at nucleotide C2498 in 23S rRNA. The sequence is that of Ribosomal RNA large subunit methyltransferase M from Vibrio vulnificus (strain CMCP6).